The primary structure comprises 103 residues: Salivary thrombin inhibitor anophelin (103 aa).

Residues 1–21 (MASKLFVLAFLCLALVVVVQS) form the signal peptide. Residues 24 to 103 (QYARGDVPTY…PAASSSESDE (80 aa)) form a disordered region. Residues 56–68 (EEFDPSLLEEHAD) form a blocks exosite I of host thrombin region. Residues 74 to 77 (DPGR) form a blocks active site cleft of host thrombin in a reverse direction compared to substrates region. Residues 91-103 (ASAPAASSSESDE) are compositionally biased toward low complexity.

It belongs to the anophelin family. In terms of assembly, interacts with human F2 (thrombin); the interaction results in thrombin inhibition. Female salivary gland (at protein level). Not detected in female midgut, head, carcass and male tissues (at protein level).

It is found in the secreted. With respect to regulation, increasing concentration of NaCl decreases affinity for thrombin. Its function is as follows. Salivary protein with anticoagulant activity that inhibits host thrombin (F2); binds to the proteinase in a reverse orientation (opposite to substrates). The protein is Salivary thrombin inhibitor anophelin of Anopheles gambiae (African malaria mosquito).